The chain runs to 318 residues: D-alanine--D-alanine ligase B (318 aa).

Residues 117-315 (KQVWLSLGLS…FEALVWRVLE (199 aa)) form the ATP-grasp domain. Residue 146 to 201 (AEQIGLPVIVKPANEGSSVGVSRVFDQAQLDEAVTLAARYDGALLMEQLIEGDELT) participates in ATP binding. 3 residues coordinate Mg(2+): Asp-268, Glu-282, and Asn-284.

The protein belongs to the D-alanine--D-alanine ligase family. It depends on Mg(2+) as a cofactor. The cofactor is Mn(2+).

It localises to the cytoplasm. The enzyme catalyses 2 D-alanine + ATP = D-alanyl-D-alanine + ADP + phosphate + H(+). It participates in cell wall biogenesis; peptidoglycan biosynthesis. Its function is as follows. Cell wall formation. This is D-alanine--D-alanine ligase B from Xanthomonas campestris pv. campestris (strain ATCC 33913 / DSM 3586 / NCPPB 528 / LMG 568 / P 25).